We begin with the raw amino-acid sequence, 494 residues long: Alpha-amylase A (494 aa).

The signal sequence occupies residues 1–18 (MFLAKSLVCLALLAVANA). Q19 carries the post-translational modification Pyrrolidone carboxylic acid. A disulfide bond links C46 and C102. Ca(2+) contacts are provided by N116, R165, and D174. C153 and C167 are oxidised to a cystine. A chloride-binding site is contributed by R202. D204 serves as the catalytic Nucleophile. H208 is a binding site for Ca(2+). Catalysis depends on E241, which acts as the Proton donor. Chloride-binding residues include N304 and R343. 2 disulfides stabilise this stretch: C376–C382 and C448–C460.

It belongs to the glycosyl hydrolase 13 family. As to quaternary structure, monomer. Requires Ca(2+) as cofactor. The cofactor is chloride.

The enzyme catalyses Endohydrolysis of (1-&gt;4)-alpha-D-glucosidic linkages in polysaccharides containing three or more (1-&gt;4)-alpha-linked D-glucose units.. The protein is Alpha-amylase A (Amy-d) of Drosophila mauritiana (Fruit fly).